An 850-amino-acid chain; its full sequence is Penicillin-binding protein 1A (850 aa).

Over 1 to 5 (MKFVK) the chain is Cytoplasmic. A helical; Signal-anchor for type II membrane protein transmembrane segment spans residues 6 to 26 (YFLILAVCCILLGAGSIYGLY). The Periplasmic portion of the chain corresponds to 27-850 (RYIEPQLPDV…IDNGEAQELF (824 aa)). A transglycosylase region spans residues 48–216 (MQIYSADGEL…STFNPLYSMD (169 aa)). Residue Glu86 is the Proton donor; for transglycosylase activity of the active site. The interval 400 to 710 (DVLQTGQQIW…GWRAGRDLQR (311 aa)) is transpeptidase. Ser465 (acyl-ester intermediate; for transpeptidase activity) is an active-site residue.

It in the N-terminal section; belongs to the glycosyltransferase 51 family. This sequence in the C-terminal section; belongs to the transpeptidase family.

The protein localises to the cell inner membrane. It carries out the reaction [GlcNAc-(1-&gt;4)-Mur2Ac(oyl-L-Ala-gamma-D-Glu-L-Lys-D-Ala-D-Ala)](n)-di-trans,octa-cis-undecaprenyl diphosphate + beta-D-GlcNAc-(1-&gt;4)-Mur2Ac(oyl-L-Ala-gamma-D-Glu-L-Lys-D-Ala-D-Ala)-di-trans,octa-cis-undecaprenyl diphosphate = [GlcNAc-(1-&gt;4)-Mur2Ac(oyl-L-Ala-gamma-D-Glu-L-Lys-D-Ala-D-Ala)](n+1)-di-trans,octa-cis-undecaprenyl diphosphate + di-trans,octa-cis-undecaprenyl diphosphate + H(+). It catalyses the reaction Preferential cleavage: (Ac)2-L-Lys-D-Ala-|-D-Ala. Also transpeptidation of peptidyl-alanyl moieties that are N-acyl substituents of D-alanine.. It functions in the pathway cell wall biogenesis; peptidoglycan biosynthesis. In terms of biological role, cell wall formation. Synthesis of cross-linked peptidoglycan from the lipid intermediates. The enzyme has a penicillin-insensitive transglycosylase N-terminal domain (formation of linear glycan strands) and a penicillin-sensitive transpeptidase C-terminal domain (cross-linking of the peptide subunits). The polypeptide is Penicillin-binding protein 1A (mrcA) (Escherichia coli (strain K12)).